The sequence spans 834 residues: MEAMLPLFEPKGRVLLVDGHHLAYRTFFALKGLTTSRGEPVQAVYGFAKSLLKALKEDGYKAVFVVFDAKAPSFRHEAYEAYKAGRAPTPEDFPRQLALIKELVDLLGFTRLEVPGYEADDVLATLAKKAEKEGYEVRILTADRDLYQLVSDRVAVLHPEGHLITPEWLWEKYGLRPEQWVDFRALVGDPSDNLPGVKGIGEKTALKLLKEWGSLENLLKNLDRVKPENVREKIKAHLEDLRLSLELSRVRTDLPLEVDLAQGREPDREGLRAFLERLEFGSLLHEFGLLEAPAPLEEAPWPPPEGAFVGFVLSRPEPMWAELKALAACRDGRVHRAADPLAGLKDLKEVRGLLAKDLAVLASREGLDLVPGDDPMLLAYLLDPSNTTPEGVARRYGGEWTEDAAHRALLSERLHRNLLKRLEGEEKLLWLYHEVEKPLSRVLAHMEATGVRLDVAYLQALSLELAEEIRRLEEEVFRLAGHPFNLNSRDQLERVLFDELRLPALGKTQKTGKRSTSAAVLEALREAHPIVEKILQHRELTKLKNTYVDPLPSLVHPRTGRLHTRFNQTATATGRLSSSDPNLQNIPVRTPLGQRIRRAFVAEAGWALVALDYSQIELRVLAHLSGDENLIRVFQEGKDIHTQTASWMFGVPPEAVDPLMRRAAKTVNFGVLYGMSAHRLSQELAIPYEEAVAFIERYFQSFPKVRAWIEKTLEEGRKRGYVETLFGRRRYVPDLNARVKSVREAAERMAFNMPVQGTAADLMKLAMVKLFPRLREMGARMLLQVHDELLLEAPQARAEEVAALAKEAMEKAYPLAVPLEVEVGMGEDWLSAKG.

The 5'-3' exonuclease domain maps to 176–262; that stretch reads RPEQWVDFRA…DLPLEVDLAQ (87 aa). Residues 412-834 form a polymerase region; that stretch reads ERLHRNLLKR…MGEDWLSAKG (423 aa).

This sequence belongs to the DNA polymerase type-A family.

It carries out the reaction DNA(n) + a 2'-deoxyribonucleoside 5'-triphosphate = DNA(n+1) + diphosphate. In addition to polymerase activity, this DNA polymerase exhibits 5'-3' exonuclease activity. The polypeptide is DNA polymerase I, thermostable (polA) (Thermus thermophilus (strain ATCC 27634 / DSM 579 / HB8)).